The chain runs to 332 residues: Spherulin-4 (332 aa).

Positions 1–22 are cleaved as a signal peptide; it reads MNIKIVVLVIFAILLGSALAWH. Positions 26-60 are disordered; the sequence is HHNPTKAPTEAPHRGGGGGGGHNTPAPTQPPRQNT.

This Physarum polycephalum (Slime mold) protein is Spherulin-4.